The sequence spans 613 residues: DNA mismatch repair protein MutL (613 aa).

The protein belongs to the DNA mismatch repair MutL/HexB family.

In terms of biological role, this protein is involved in the repair of mismatches in DNA. It is required for dam-dependent methyl-directed DNA mismatch repair. May act as a 'molecular matchmaker', a protein that promotes the formation of a stable complex between two or more DNA-binding proteins in an ATP-dependent manner without itself being part of a final effector complex. This chain is DNA mismatch repair protein MutL, found in Janthinobacterium sp. (strain Marseille) (Minibacterium massiliensis).